Reading from the N-terminus, the 160-residue chain is Transcription antitermination protein NusB (160 aa).

Belongs to the NusB family.

Functionally, involved in transcription antitermination. Required for transcription of ribosomal RNA (rRNA) genes. Binds specifically to the boxA antiterminator sequence of the ribosomal RNA (rrn) operons. The chain is Transcription antitermination protein NusB from Gluconobacter oxydans (strain 621H) (Gluconobacter suboxydans).